Reading from the N-terminus, the 110-residue chain is Endoribonuclease SymE (110 aa).

The 46-residue stretch at 29–74 folds into the SpoVT-AbrB domain; the sequence is SSYPEYTRIPAITLKGQWLEDAGFTTGTQVDVRVMNGCIVLTAQQP.

The protein belongs to the SymE family.

It is found in the cytoplasm. Its function is as follows. Involved in the degradation and recycling of damaged RNA. It is itself a target for degradation by the ATP-dependent protease Lon. The polypeptide is Endoribonuclease SymE (Salmonella choleraesuis (strain SC-B67)).